The following is a 54-amino-acid chain: MAVSQLMQNLTKQLLHVRERKTDVMQEGETAKELNYEGEDMQATSSAQNRQTSV.

Residues 23 to 35 (DVMQEGETAKELN) are compositionally biased toward basic and acidic residues. The interval 23-54 (DVMQEGETAKELNYEGEDMQATSSAQNRQTSV) is disordered. A compositionally biased stretch (polar residues) spans 42 to 54 (QATSSAQNRQTSV).

This is an uncharacterized protein from Bacillus subtilis (strain 168).